Here is a 283-residue protein sequence, read N- to C-terminus: Agmatinase (283 aa).

6 residues coordinate a divalent metal cation: histidine 112, aspartate 131, histidine 133, aspartate 135, aspartate 211, and aspartate 213.

It belongs to the arginase family. Agmatinase subfamily. Homotetramer. It depends on a divalent metal cation as a cofactor.

It carries out the reaction agmatine + H2O = urea + putrescine. The protein operates within amine and polyamine biosynthesis; putrescine biosynthesis via agmatine pathway; putrescine from agmatine: step 1/1. Inhibited by putrescine. Activity is not affected by arginine and ornithine. Its function is as follows. Catalyzes the formation of putrescine from agmatine. Cannot use arginine. The polypeptide is Agmatinase (Pyrococcus horikoshii (strain ATCC 700860 / DSM 12428 / JCM 9974 / NBRC 100139 / OT-3)).